A 101-amino-acid polypeptide reads, in one-letter code: Small ribosomal subunit protein uS14 (101 aa).

It belongs to the universal ribosomal protein uS14 family. In terms of assembly, part of the 30S ribosomal subunit. Contacts proteins S3 and S10.

Its function is as follows. Binds 16S rRNA, required for the assembly of 30S particles and may also be responsible for determining the conformation of the 16S rRNA at the A site. In Paraburkholderia phymatum (strain DSM 17167 / CIP 108236 / LMG 21445 / STM815) (Burkholderia phymatum), this protein is Small ribosomal subunit protein uS14.